The sequence spans 178 residues: Mediator of RNA polymerase II transcription subunit 31 (178 aa).

Over residues 129 to 140 (EGQELEESEDEA) the composition is skewed to acidic residues. The disordered stretch occupies residues 129 to 178 (EGQELEESEDEADIRQKDTEDEDDEETMKKPDADTAEKNSTTSTVSKKEK). Basic and acidic residues predominate over residues 155–165 (TMKKPDADTAE). Over residues 166–178 (KNSTTSTVSKKEK) the composition is skewed to polar residues.

The protein belongs to the Mediator complex subunit 31 family. In terms of assembly, component of the Mediator complex.

It is found in the nucleus. Its function is as follows. Component of the Mediator complex, a coactivator involved in the regulated transcription of nearly all RNA polymerase II-dependent genes. Mediator functions as a bridge to convey information from gene-specific regulatory proteins to the basal RNA polymerase II transcription machinery. Mediator is recruited to promoters by direct interactions with regulatory proteins and serves as a scaffold for the assembly of a functional preinitiation complex with RNA polymerase II and the general transcription factors. The sequence is that of Mediator of RNA polymerase II transcription subunit 31 from Caenorhabditis elegans.